Here is a 157-residue protein sequence, read N- to C-terminus: Protein Smg homolog (157 aa).

This sequence belongs to the Smg family.

This chain is Protein Smg homolog, found in Xylella fastidiosa (strain M23).